The sequence spans 393 residues: NAD(P)H-quinone oxidoreductase subunit H, chloroplastic (393 aa).

The protein belongs to the complex I 49 kDa subunit family. As to quaternary structure, NDH is composed of at least 16 different subunits, 5 of which are encoded in the nucleus.

The protein resides in the plastid. The protein localises to the chloroplast thylakoid membrane. The catalysed reaction is a plastoquinone + NADH + (n+1) H(+)(in) = a plastoquinol + NAD(+) + n H(+)(out). It catalyses the reaction a plastoquinone + NADPH + (n+1) H(+)(in) = a plastoquinol + NADP(+) + n H(+)(out). Its function is as follows. NDH shuttles electrons from NAD(P)H:plastoquinone, via FMN and iron-sulfur (Fe-S) centers, to quinones in the photosynthetic chain and possibly in a chloroplast respiratory chain. The immediate electron acceptor for the enzyme in this species is believed to be plastoquinone. Couples the redox reaction to proton translocation, and thus conserves the redox energy in a proton gradient. In Ranunculus macranthus (Large buttercup), this protein is NAD(P)H-quinone oxidoreductase subunit H, chloroplastic.